The sequence spans 618 residues: Proline--tRNA ligase (618 aa).

Belongs to the class-II aminoacyl-tRNA synthetase family. ProS type 1 subfamily. In terms of assembly, homodimer.

The protein resides in the cytoplasm. The enzyme catalyses tRNA(Pro) + L-proline + ATP = L-prolyl-tRNA(Pro) + AMP + diphosphate. Its function is as follows. Catalyzes the attachment of proline to tRNA(Pro) in a two-step reaction: proline is first activated by ATP to form Pro-AMP and then transferred to the acceptor end of tRNA(Pro). As ProRS can inadvertently accommodate and process non-cognate amino acids such as alanine and cysteine, to avoid such errors it has two additional distinct editing activities against alanine. One activity is designated as 'pretransfer' editing and involves the tRNA(Pro)-independent hydrolysis of activated Ala-AMP. The other activity is designated 'posttransfer' editing and involves deacylation of mischarged Ala-tRNA(Pro). The misacylated Cys-tRNA(Pro) is not edited by ProRS. This Streptococcus equi subsp. equi (strain 4047) protein is Proline--tRNA ligase.